A 106-amino-acid chain; its full sequence is UPF0145 protein Fphi_1781 (106 aa).

This sequence belongs to the UPF0145 family.

The sequence is that of UPF0145 protein Fphi_1781 from Francisella philomiragia subsp. philomiragia (strain ATCC 25017 / CCUG 19701 / FSC 153 / O#319-036).